The primary structure comprises 545 residues: MDQYNKYITTNKRLGLVNWMLNVSRIFKLRSHTFQSAVNIMDSYFLKIDFEPNAEELSQTAVLCLKISSMICEIRPLFMDDVLYLLDIDTDNEFTNNIISSQLCTVELSILEKLNYKVYYLTIWKYIKQFWAKRNLPEQYYHLAYSLANILLSTNDYLRFDPKILADKIINICIVLEEDPECYETLIEDELEYQYIHLIWNRAYHKFKDYFNAVISTTLLSKHQVKVPPIQLSSNIKFPNSIFCTKIYPEKEFTMYSKKTVKKIDFQNKLGSGTYGSVYKITYDDNQIAMKKIRNKSTFVIDSNMIREVNNLMILSGHPNIINIEGYYYWDLTSTMYIGLDLMDTSLAIYLTKNNISESLKIKYVLQLLEAINYMHSKGIMHRDLSASNILIKGSTLKIGDFGSARFFSGDTLDTKYTRNVCSINYRAMELLMGIFPYNNKIDIWSCGCLITEILTGKRIFNGLKEAEVINKIHDILGVPDADSMNMSVFLSKSKIPLVTQGTLFTPLNLYPNQFPIIYQMLDYNPYKRPNAENCLKKIKESFDS.

The region spanning 13 to 125 (RLGLVNWMLN…YKVYYLTIWK (113 aa)) is the Cyclin N-terminal domain. The Protein kinase domain occupies 264 to 543 (IDFQNKLGSG…NCLKKIKESF (280 aa)). ATP contacts are provided by residues 270–278 (LGSGTYGSV) and Lys-291. The active-site Proton acceptor is the Asp-384.

The protein belongs to the protein kinase superfamily. Ser/Thr protein kinase family.

It carries out the reaction L-seryl-[protein] + ATP = O-phospho-L-seryl-[protein] + ADP + H(+). It catalyses the reaction L-threonyl-[protein] + ATP = O-phospho-L-threonyl-[protein] + ADP + H(+). The protein is Putative serine/threonine-protein kinase L673 of Acanthamoeba polyphaga (Amoeba).